The primary structure comprises 317 residues: Inositol oxygenase 2 (317 aa).

Substrate-binding positions include arginine 57 and 115 to 117; that span reads DES. Residues histidine 128, histidine 153, and aspartate 154 each contribute to the Fe cation site. Residues lysine 157 and 174–175 contribute to the substrate site; that span reads GD. Histidine 226, histidine 252, and aspartate 285 together coordinate Fe cation. A substrate-binding site is contributed by 252 to 253; sequence HS.

Belongs to the myo-inositol oxygenase family. Requires Fe cation as cofactor. Expressed mainly in roots, stems, flowers and siliques. Low expression in leaves.

The protein resides in the cytoplasm. It carries out the reaction myo-inositol + O2 = D-glucuronate + H2O + H(+). Its pathway is polyol metabolism; myo-inositol degradation into D-glucuronate; D-glucuronate from myo-inositol: step 1/1. Its function is as follows. Involved in the biosynthesis of UDP-glucuronic acid (UDP-GlcA), providing nucleotide sugars for cell-wall polymers. May be also involved in plant ascorbate biosynthesis. In Arabidopsis thaliana (Mouse-ear cress), this protein is Inositol oxygenase 2 (MIOX2).